The chain runs to 294 residues: 33 kDa chaperonin (294 aa).

2 cysteine pairs are disulfide-bonded: cysteine 238-cysteine 240 and cysteine 271-cysteine 274.

Belongs to the HSP33 family. Under oxidizing conditions two disulfide bonds are formed involving the reactive cysteines. Under reducing conditions zinc is bound to the reactive cysteines and the protein is inactive.

The protein localises to the cytoplasm. In terms of biological role, redox regulated molecular chaperone. Protects both thermally unfolding and oxidatively damaged proteins from irreversible aggregation. Plays an important role in the bacterial defense system toward oxidative stress. The protein is 33 kDa chaperonin of Staphylococcus carnosus (strain TM300).